The primary structure comprises 524 residues: MSDRVIIFDTTLRDGEQALAASLTVKEKLQIAQALERLGVDIMEVGFPVSSPGDFQSVQTIARHIKNSRVCALARALPQDIDAAGEALRVAEAFRIHTFISTSSIHVESKLKKSFEDVLEMGVSAIKHALRYTDDVEFSCEDAGRTPIDNLCRMVEAAIKAGARTINIPDTVGYTVPTEFSGIIQTLFNRVPNIDKAIISVHCHDDLGLSVANSIGAVQMGARQIECTINGIGERAGNCSLEEVAMILKTRADLLGVHTNIRHSEIHRTSALVSQLCNMPVQPNKAIVGANAFSHSSGIHQDGVLKAKNTYEIITPESIGLPQNNLNMTSRSGRHVIKHRMESMGYAESSYDLDHLYGKFLTLADKKGQVFDYDLEALAFFSQIHEEPEHFKLEYLGVQSGSSVLATASVKLKVGQDLVCEAATGNGPVDAVYQCINRITGYEIRIDKYALKAKGEGKNALGQVDIVAEYKGRKFHGMGLATDIIESSAQALIHVINSIWRADQVAEQMERNVTKTDKINTESV.

The 263-residue stretch at Val5–His267 folds into the Pyruvate carboxyltransferase domain. Mn(2+) is bound by residues Asp14, His202, His204, and Asn238. Residues Lys392–Val524 form a regulatory domain region.

The protein belongs to the alpha-IPM synthase/homocitrate synthase family. LeuA type 1 subfamily. Homodimer. Requires Mn(2+) as cofactor.

Its subcellular location is the cytoplasm. The enzyme catalyses 3-methyl-2-oxobutanoate + acetyl-CoA + H2O = (2S)-2-isopropylmalate + CoA + H(+). The protein operates within amino-acid biosynthesis; L-leucine biosynthesis; L-leucine from 3-methyl-2-oxobutanoate: step 1/4. Its function is as follows. Catalyzes the condensation of the acetyl group of acetyl-CoA with 3-methyl-2-oxobutanoate (2-ketoisovalerate) to form 3-carboxy-3-hydroxy-4-methylpentanoate (2-isopropylmalate). The polypeptide is 2-isopropylmalate synthase (Aeromonas salmonicida (strain A449)).